A 542-amino-acid chain; its full sequence is LysM domain-containing protein ARB_00327 (542 aa).

Positions 1-35 (MLSSVLFPAMRTLLLLKYVFSLISLSAICCQTVSA) are cleaved as a signal peptide. N-linked (GlcNAc...) asparagine glycosylation is found at Asn-218, Asn-298, Asn-381, and Asn-415. One can recognise a LysM 1 domain in the interval 264–310 (RWYGVKKGDYCNLIVLKFGITMDNFIFLNPALNSNCTNLYAEESYCV). Residues 439-484 (DSDEPTPTTPITTSDDPTSTSATPTTPTTSSKPSPGAPTMTGQPSA) form a disordered region. A compositionally biased stretch (low complexity) spans 443–472 (PTPTTPITTSDDPTSTSATPTTPTTSSKPS). Residues 487–534 (KWHTVTNGESCTVIPKTFGITLEQFLAWNPTVKSDCTENFWAGYAYCV) enclose the LysM 2 domain.

It is found in the secreted. Might have a role in sequestration of chitin oligosaccharides (breakdown products of fungal cell walls that are released during invasion and act as triggers of host immunity) to dampen host defense. This chain is LysM domain-containing protein ARB_00327, found in Arthroderma benhamiae (strain ATCC MYA-4681 / CBS 112371) (Trichophyton mentagrophytes).